Consider the following 307-residue polypeptide: Aspartate carbamoyltransferase catalytic subunit (307 aa).

Positions 54 and 55 each coordinate carbamoyl phosphate. K83 serves as a coordination point for L-aspartate. Residues R104, H132, and Q135 each coordinate carbamoyl phosphate. 2 residues coordinate L-aspartate: R165 and R228. 2 residues coordinate carbamoyl phosphate: L267 and P268.

The protein belongs to the aspartate/ornithine carbamoyltransferase superfamily. ATCase family. In terms of assembly, heterododecamer (2C3:3R2) of six catalytic PyrB chains organized as two trimers (C3), and six regulatory PyrI chains organized as three dimers (R2).

It catalyses the reaction carbamoyl phosphate + L-aspartate = N-carbamoyl-L-aspartate + phosphate + H(+). It functions in the pathway pyrimidine metabolism; UMP biosynthesis via de novo pathway; (S)-dihydroorotate from bicarbonate: step 2/3. Functionally, catalyzes the condensation of carbamoyl phosphate and aspartate to form carbamoyl aspartate and inorganic phosphate, the committed step in the de novo pyrimidine nucleotide biosynthesis pathway. The sequence is that of Aspartate carbamoyltransferase catalytic subunit from Clostridium botulinum (strain Eklund 17B / Type B).